Consider the following 705-residue polypeptide: Ribosomal RNA large subunit methyltransferase K/L (705 aa).

Positions 43-154 (LMYQSLMWSR…KDTASIALDL (112 aa)) constitute a THUMP domain.

It belongs to the methyltransferase superfamily. RlmKL family.

The protein resides in the cytoplasm. It catalyses the reaction guanosine(2445) in 23S rRNA + S-adenosyl-L-methionine = N(2)-methylguanosine(2445) in 23S rRNA + S-adenosyl-L-homocysteine + H(+). The enzyme catalyses guanosine(2069) in 23S rRNA + S-adenosyl-L-methionine = N(2)-methylguanosine(2069) in 23S rRNA + S-adenosyl-L-homocysteine + H(+). Specifically methylates the guanine in position 2445 (m2G2445) and the guanine in position 2069 (m7G2069) of 23S rRNA. In Erwinia tasmaniensis (strain DSM 17950 / CFBP 7177 / CIP 109463 / NCPPB 4357 / Et1/99), this protein is Ribosomal RNA large subunit methyltransferase K/L.